The primary structure comprises 549 residues: DNA 3'-5' helicase XPB (549 aa).

Residues 1 to 130 form a required for protein stability or solubility region; the sequence is MTDGPLIVQS…RNKKIAPMLG (130 aa). The region spanning 190 to 344 is the Helicase ATP-binding domain; that stretch reads ADSFWAGGSG…DVFSLIGPKR (155 aa). Residue 203-210 coordinates ATP; that stretch reads LPCGAGKT. The DEAH box motif lies at 298–301; sequence DEVH. In terms of domain architecture, Helicase C-terminal spans 399 to 545; sequence VVKSILAKHP…YIIRDADDLL (147 aa).

This sequence belongs to the helicase family. RAD25/XPB subfamily. In terms of assembly, monomer. The cofactor is Mn(2+). Mg(2+) serves as cofactor.

It carries out the reaction Couples ATP hydrolysis with the unwinding of duplex DNA by translocating in the 3'-5' direction.. The catalysed reaction is ATP + H2O = ADP + phosphate + H(+). Its function is as follows. ATP-dependent 3'-5' DNA helicase, unwinds 3'-overhangs, 3'- flaps, and splayed-arm DNA substrates but not 5'-overhangs, 5'-flap substrates, 3-way junctions or Holliday junctions. Not highly efficient in vitro. Requires ATP hydrolysis for helicase activity; the ATPase activity is DNA-dependent and requires a minimum of 4 single-stranded nucleotides (nt) with 6-10 nt providing all necessary interactions for full processive unwinding. The ATPase prefers ATP over CTP or GTP, is almost inactive with TTP. DNA helicase activity requires ATP or dATP and only acts when the 3'-overhang is &gt;20 nt. Capable of unwinding a DNA:RNA hybrid if the 3'-overhang is DNA. Also catalyzes ATP-independent annealing of complementary DNA strands; annealing requires Mg(2+). This is DNA 3'-5' helicase XPB from Mycobacterium tuberculosis (strain ATCC 25618 / H37Rv).